The chain runs to 582 residues: Probable inorganic phosphate transporter 1-9 (582 aa).

The Cytoplasmic segment spans residues 1–23 (MAPRIRVLAALDQARTQYYHFKA). Residues 24-44 (IVIAGMGLFTDSYDLFCISPV) traverse the membrane as a helical segment. At 45–75 (MKIFGRVYYAPSGSVDGSGSGPGVTPPAVVS) the chain is on the extracellular side. The helical transmembrane segment at 76–96 (ATVGVALLGAVAGNVVFGALG) threads the bilayer. The Cytoplasmic portion of the chain corresponds to 97-103 (DRVGRRR). The helical transmembrane segment at 104-124 (VYGACLLLMVCSSVGSGLSVC) threads the bilayer. The Extracellular portion of the chain corresponds to 125–130 (RTRRCA). The helical transmembrane segment at 131 to 151 (LASLCFFRFLLGVGVGGDYPL) threads the bilayer. Residues 152-165 (SATIMSEFANRRTR) are Cytoplasmic-facing. A helical transmembrane segment spans residues 166–186 (GAFIAAVFSMQGFGILVSSAV). At 187-210 (TMAVAAAFDHYTGYPAPLDTPECA) the chain is on the extracellular side. A helical membrane pass occupies residues 211–231 (DLAWRIILMAGAVPAALTYYW). The Cytoplasmic portion of the chain corresponds to 232–307 (RMSMPETARY…RRFVRQHGRD (76 aa)). Residues 308-328 (LFACAAAWFLLDIPYYSSTLF) form a helical membrane-spanning segment. The Extracellular segment spans residues 329–354 (QSQIYRPWFPPAAKVNAFQEAFNVAK). A helical membrane pass occupies residues 355 to 375 (FQAVIAVASTIPGYFAAMLLI). Residues 376 to 385 (ERAGRRRLQM) lie on the Cytoplasmic side of the membrane. A helical transmembrane segment spans residues 386-406 (AGFLLMAVFLFALAGPYDGYW). Topologically, residues 407-415 (RDHAKTAGY) are extracellular. The chain crosses the membrane as a helical span at residues 416 to 436 (IVLYSLTFFSANLGPNTTTFI). The Cytoplasmic portion of the chain corresponds to 437–451 (LPAELFPARFRSTCH). Residues 452 to 472 (GLSGAAGKLGALVGSIGFLWA) traverse the membrane as a helical segment. The Extracellular segment spans residues 473 to 485 (SQQKDGAAAGHLP). The helical transmembrane segment at 486-506 (GIGMMYALFVLGGICLLGLAL) threads the bilayer. Topologically, residues 507–582 (TYAFTPETMT…SPILPHRMSL (76 aa)) are cytoplasmic. A disordered region spans residues 519-541 (LEENESSVQAQSQVGDGGSDAGN).

This sequence belongs to the major facilitator superfamily. Phosphate:H(+) symporter (TC 2.A.1.9) family. As to expression, expressed at low levels in roots.

It is found in the membrane. In terms of biological role, high-affinity transporter for external inorganic phosphate. This Oryza sativa subsp. japonica (Rice) protein is Probable inorganic phosphate transporter 1-9 (PHT1-9).